We begin with the raw amino-acid sequence, 319 residues long: Ribosomal RNA small subunit methyltransferase H (319 aa).

S-adenosyl-L-methionine is bound by residues 35–37 (AGH), Asp-55, Phe-84, Asp-104, and Gln-111.

The protein belongs to the methyltransferase superfamily. RsmH family.

It localises to the cytoplasm. The catalysed reaction is cytidine(1402) in 16S rRNA + S-adenosyl-L-methionine = N(4)-methylcytidine(1402) in 16S rRNA + S-adenosyl-L-homocysteine + H(+). Specifically methylates the N4 position of cytidine in position 1402 (C1402) of 16S rRNA. This is Ribosomal RNA small subunit methyltransferase H from Enterococcus hirae.